The chain runs to 83 residues: Heterin-1 (83 aa).

An N-terminal signal peptide occupies residues 1–22; sequence MNGKLLLVSLMVTMLVMQPAEA. The propeptide occupies 66-83; it reads VAGQIPFDEFMDILHYRP.

The protein belongs to the non-disulfide-bridged peptide (NDBP) superfamily. Long chain multifunctional peptide (group 2) family. In terms of tissue distribution, expressed by the venom gland.

Its subcellular location is the secreted. The protein localises to the target cell membrane. Functionally, amphipathic peptide with potent activities against both Gram-positive and Gram-negative bacteria. Is the most active against the two Gram-positive Bacillus megaterium and Micrococcus luteus (MIC=4.0 uM for both). It has relatively low hemolytic activity against human erythrocytes. The polypeptide is Heterin-1 (Heterometrus spinifer (Asia giant forest scorpion)).